The chain runs to 159 residues: MTRSEKVEIIAKLEEGFKASEAIVVCNYRGLSTKKLEELRNNARENNVKVQIVKNTLANIALNNSGKTGLVLKDTNIYLWGEDQLSVSKVAAKFEENNDKFEIKTAYIEGEVADVAKVKALAKMPSRNELLAMLLQVWNAPITNFTIGLNALKNKKESE.

It belongs to the universal ribosomal protein uL10 family. In terms of assembly, part of the ribosomal stalk of the 50S ribosomal subunit. The N-terminus interacts with L11 and the large rRNA to form the base of the stalk. The C-terminus forms an elongated spine to which L12 dimers bind in a sequential fashion forming a multimeric L10(L12)X complex.

In terms of biological role, forms part of the ribosomal stalk, playing a central role in the interaction of the ribosome with GTP-bound translation factors. This Campylobacter jejuni subsp. jejuni serotype O:6 (strain 81116 / NCTC 11828) protein is Large ribosomal subunit protein uL10.